A 147-amino-acid polypeptide reads, in one-letter code: Effector TSP1 (147 aa).

The N-terminal stretch at Met1–Ala19 is a signal peptide. 2 disulfide bridges follow: Cys44-Cys51 and Cys67-Cys87.

Homodimer.

Its subcellular location is the secreted. Functionally, stimulates salicylic acid signaling in host plant roots. The protein is Effector TSP1 of Hypocrea virens (strain Gv29-8 / FGSC 10586) (Gliocladium virens).